Consider the following 124-residue polypeptide: Large ribosomal subunit protein bL19 (124 aa).

Belongs to the bacterial ribosomal protein bL19 family.

In terms of biological role, this protein is located at the 30S-50S ribosomal subunit interface and may play a role in the structure and function of the aminoacyl-tRNA binding site. The sequence is that of Large ribosomal subunit protein bL19 from Zymomonas mobilis subsp. mobilis (strain ATCC 31821 / ZM4 / CP4).